A 404-amino-acid polypeptide reads, in one-letter code: MLLAEIISVGTELLFGEIVDSNAAFLARELGERGVTLHRKTVLGDNLGRVSEGLALALSRADLVIVGGGLGPTDDDLTREAIAAVMQETPAEDPELLAWLRGLYEARGRVMPEVNRKQAWLIPSAEALPNPVGTAPGWFVRRQTEQGEKIIVALPGPPREMHKMWREQVLPRLPLPGRALVHTTIHTQGIGESNVAEILGELTRQANPSVATYFRKTGVDVRVAASADTEAEARALLAPVLDDVRGKLARWTWGEDGQTLAGAVGQQLAGRTLGVIEAGSAGALSLLLADEPAFHDAAVTQDHRRLITLGLTPVTLKEAGLVSEQAARELAAGAREHLASDVGLSVVVGVTGERAGQAYAALDTGTLQKTVTVNWPGDPEQVRERAAVAALGLAFRALAAGGEG.

Belongs to the CinA family.

This chain is CinA-like protein, found in Deinococcus radiodurans (strain ATCC 13939 / DSM 20539 / JCM 16871 / CCUG 27074 / LMG 4051 / NBRC 15346 / NCIMB 9279 / VKM B-1422 / R1).